The sequence spans 561 residues: Putative transport protein YbjL (561 aa).

The next 5 membrane-spanning stretches (helical) occupy residues 8–28, 32–52, 66–86, 94–114, and 158–178; these read LLNG…LCLG, LGSI…LLGQ, FMLF…SIFF, MLAL…GKLF, and NLSL…IVGA. RCK C-terminal domains follow at residues 200–288 and 292–373; these read RGLD…SFRN and VFDR…RIGF. 5 consecutive transmembrane segments (helical) span residues 383 to 403, 406 to 426, 451 to 471, 475 to 495, and 540 to 560; these read LLAF…TFQF, FSFG…LGFM, VFMA…LGAI, MLIA…LFGA, and AIAN…WPGL.

This sequence belongs to the AAE transporter (TC 2.A.81) family. YbjL subfamily.

Its subcellular location is the cell membrane. The polypeptide is Putative transport protein YbjL (Shigella sonnei (strain Ss046)).